We begin with the raw amino-acid sequence, 105 residues long: Sec-independent protein translocase protein TatA (105 aa).

The helical transmembrane segment at 1-21 threads the bilayer; the sequence is MSLGPWEIGIIVLLIIVLFGA. The segment covering 41–50 has biased composition (basic and acidic residues); sequence EVKEMNKDGD. Residues 41–105 form a disordered region; that stretch reads EVKEMNKDGD…QNYEDPNRTS (65 aa). Positions 52–92 are enriched in low complexity; that stretch reads PEQQQQPQQQIAPNQIEAPQPNFEQHYQGQQVQQPQNPQTP. The span at 96 to 105 shows a compositional bias: basic and acidic residues; sequence QNYEDPNRTS.

Belongs to the TatA/E family. In terms of assembly, the Tat system comprises two distinct complexes: a TatABC complex, containing multiple copies of TatA, TatB and TatC subunits, and a separate TatA complex, containing only TatA subunits. Substrates initially bind to the TatABC complex, which probably triggers association of the separate TatA complex to form the active translocon.

It is found in the cell membrane. In terms of biological role, part of the twin-arginine translocation (Tat) system that transports large folded proteins containing a characteristic twin-arginine motif in their signal peptide across membranes. TatA could form the protein-conducting channel of the Tat system. This Corynebacterium glutamicum (strain ATCC 13032 / DSM 20300 / JCM 1318 / BCRC 11384 / CCUG 27702 / LMG 3730 / NBRC 12168 / NCIMB 10025 / NRRL B-2784 / 534) protein is Sec-independent protein translocase protein TatA.